The following is a 267-amino-acid chain: Diphthine synthase (267 aa).

Residues L9, D85, V88, 113–114 (SI), L170, A211, and H236 contribute to the S-adenosyl-L-methionine site.

The protein belongs to the diphthine synthase family. As to quaternary structure, homodimer.

The catalysed reaction is 2-[(3S)-amino-3-carboxypropyl]-L-histidyl-[translation elongation factor 2] + 3 S-adenosyl-L-methionine = diphthine-[translation elongation factor 2] + 3 S-adenosyl-L-homocysteine + 3 H(+). The protein operates within protein modification; peptidyl-diphthamide biosynthesis. Functionally, S-adenosyl-L-methionine-dependent methyltransferase that catalyzes the trimethylation of the amino group of the modified target histidine residue in translation elongation factor 2 (EF-2), to form an intermediate called diphthine. The three successive methylation reactions represent the second step of diphthamide biosynthesis. The protein is Diphthine synthase of Methanococcoides burtonii (strain DSM 6242 / NBRC 107633 / OCM 468 / ACE-M).